Here is a 192-residue protein sequence, read N- to C-terminus: dTTP/UTP pyrophosphatase (192 aa).

D75 acts as the Proton acceptor in catalysis.

Belongs to the Maf family. YhdE subfamily. It depends on a divalent metal cation as a cofactor.

The protein resides in the cytoplasm. It carries out the reaction dTTP + H2O = dTMP + diphosphate + H(+). It catalyses the reaction UTP + H2O = UMP + diphosphate + H(+). In terms of biological role, nucleoside triphosphate pyrophosphatase that hydrolyzes dTTP and UTP. May have a dual role in cell division arrest and in preventing the incorporation of modified nucleotides into cellular nucleic acids. The chain is dTTP/UTP pyrophosphatase from Bdellovibrio bacteriovorus (strain ATCC 15356 / DSM 50701 / NCIMB 9529 / HD100).